Consider the following 170-residue polypeptide: Peptide deformylase (170 aa).

Positions 93 and 135 each coordinate Fe cation. Glu-136 is a catalytic residue. His-139 is a binding site for Fe cation.

Belongs to the polypeptide deformylase family. Fe(2+) serves as cofactor.

It catalyses the reaction N-terminal N-formyl-L-methionyl-[peptide] + H2O = N-terminal L-methionyl-[peptide] + formate. Removes the formyl group from the N-terminal Met of newly synthesized proteins. Requires at least a dipeptide for an efficient rate of reaction. N-terminal L-methionine is a prerequisite for activity but the enzyme has broad specificity at other positions. The protein is Peptide deformylase of Syntrophobacter fumaroxidans (strain DSM 10017 / MPOB).